Consider the following 246-residue polypeptide: Triosephosphate isomerase (246 aa).

9-11 (NWK) contacts substrate. Catalysis depends on H99, which acts as the Electrophile. E168 serves as the catalytic Proton acceptor. Substrate is bound by residues G174, S207, and 228-229 (GG).

This sequence belongs to the triosephosphate isomerase family. As to quaternary structure, homodimer.

The protein localises to the cytoplasm. It carries out the reaction D-glyceraldehyde 3-phosphate = dihydroxyacetone phosphate. Its pathway is carbohydrate biosynthesis; gluconeogenesis. It participates in carbohydrate degradation; glycolysis; D-glyceraldehyde 3-phosphate from glycerone phosphate: step 1/1. Involved in the gluconeogenesis. Catalyzes stereospecifically the conversion of dihydroxyacetone phosphate (DHAP) to D-glyceraldehyde-3-phosphate (G3P). This is Triosephosphate isomerase from Prochlorococcus marinus (strain NATL1A).